A 226-amino-acid polypeptide reads, in one-letter code: Ribosome maturation factor RimP (226 aa).

The interval 190 to 226 (VFPDTTRPQPGGKTGQRKKAQPKKPARGGAPHDDTTD) is disordered. Positions 204 to 215 (GQRKKAQPKKPA) are enriched in basic residues.

The protein belongs to the RimP family.

It is found in the cytoplasm. Its function is as follows. Required for maturation of 30S ribosomal subunits. In Nitratidesulfovibrio vulgaris (strain DSM 19637 / Miyazaki F) (Desulfovibrio vulgaris), this protein is Ribosome maturation factor RimP.